Reading from the N-terminus, the 265-residue chain is MTSTGPETSETPGATTQRHGFGIDVGGSGIKGGIVDLDTGQLIGDRIKLLTPQPATPLAVAKTIAEVVNGFGWRGPLGVTYPGVVTHGVVRTAANVDKSWIGTNARDTIGAELGGQQVTILNDADAAGLAETRYGAGKNSPGLVVLLTFGTGIGSAVIHNGTLIPNTEFGHLEVGGKEAEERAASSVKEKNDWTYPKWAKQVTRVLIAIENAIWPDLFIAGGGISRKADKWVPLLENRTPVVPAALQNTAGIVGAAMASVADTTH.

Polar residues predominate over residues 1–18 (MTSTGPETSETPGATTQR). Positions 1-22 (MTSTGPETSETPGATTQRHGFG) are disordered. 24-29 (DVGGSG) is an ATP binding site.

The protein belongs to the ROK (NagC/XylR) family. Homodimer.

The catalysed reaction is [phosphate](n) + D-glucose = [phosphate](n-1) + D-glucose 6-phosphate + H(+). The enzyme catalyses D-glucose + ATP = D-glucose 6-phosphate + ADP + H(+). In terms of biological role, catalyzes the phosphorylation of glucose using polyphosphate or ATP as the phosphoryl donor. Polyphosphate, rather than ATP, seems to be the major phosphate donor for the enzyme in M.tuberculosis. The protein is Polyphosphate glucokinase (ppgK) of Mycobacterium tuberculosis (strain CDC 1551 / Oshkosh).